Consider the following 206-residue polypeptide: Peptidyl-tRNA hydrolase (206 aa).

Tyr-14 is a tRNA binding site. Residue His-19 is the Proton acceptor of the active site. The tRNA site is built by Tyr-64, Asn-66, and Asn-112.

The protein belongs to the PTH family. In terms of assembly, monomer.

The protein resides in the cytoplasm. The catalysed reaction is an N-acyl-L-alpha-aminoacyl-tRNA + H2O = an N-acyl-L-amino acid + a tRNA + H(+). Its function is as follows. Hydrolyzes ribosome-free peptidyl-tRNAs (with 1 or more amino acids incorporated), which drop off the ribosome during protein synthesis, or as a result of ribosome stalling. In terms of biological role, catalyzes the release of premature peptidyl moieties from peptidyl-tRNA molecules trapped in stalled 50S ribosomal subunits, and thus maintains levels of free tRNAs and 50S ribosomes. This Rhodopseudomonas palustris (strain ATCC BAA-98 / CGA009) protein is Peptidyl-tRNA hydrolase.